The chain runs to 456 residues: DnaJ homolog dnj-10 (456 aa).

In terms of domain architecture, J spans Asp-44–Gly-108. A CR-type zinc finger spans residues Gly-178–Arg-257. CXXCXGXG motif repeat units follow at residues Cys-208–Gly-215, Cys-231–Gly-238, and Cys-245–Gly-252. Over residues Lys-395–Pro-429 the composition is skewed to basic and acidic residues. Residues Lys-395–Asn-443 form a disordered region.

This chain is DnaJ homolog dnj-10 (dnj-10), found in Caenorhabditis elegans.